Consider the following 288-residue polypeptide: Phenazine biosynthesis-like domain-containing protein (288 aa).

Residue Glu-46 is part of the active site.

It belongs to the PhzF family. In terms of assembly, interacts with UNRIP/MAWD.

The chain is Phenazine biosynthesis-like domain-containing protein (PBLD) from Bos taurus (Bovine).